Reading from the N-terminus, the 175-residue chain is Large ribosomal subunit protein uL6 (175 aa).

It belongs to the universal ribosomal protein uL6 family. In terms of assembly, part of the 50S ribosomal subunit.

Functionally, this protein binds to the 23S rRNA, and is important in its secondary structure. It is located near the subunit interface in the base of the L7/L12 stalk, and near the tRNA binding site of the peptidyltransferase center. The protein is Large ribosomal subunit protein uL6 of Xylella fastidiosa (strain M23).